Here is a 586-residue protein sequence, read N- to C-terminus: Beta-fructofuranosidase, insoluble isoenzyme 3 (586 aa).

An N-terminal signal peptide occupies residues 1-26 (MATARARAALVFVALLQMAAVVVVRA). The active site involves Asp-61. N-linked (GlcNAc...) asparagine glycosylation is found at Asn-154, Asn-179, Asn-341, Asn-390, and Asn-479.

It belongs to the glycosyl hydrolase 32 family.

It localises to the secreted. The protein resides in the extracellular space. The protein localises to the apoplast. Its subcellular location is the cell wall. It carries out the reaction Hydrolysis of terminal non-reducing beta-D-fructofuranoside residues in beta-D-fructofuranosides.. The sequence is that of Beta-fructofuranosidase, insoluble isoenzyme 3 (CIN3) from Oryza sativa subsp. indica (Rice).